The chain runs to 159 residues: Disulfide bond formation protein B (159 aa).

The Cytoplasmic segment spans residues 1 to 8 (MQANSRAF). A helical transmembrane segment spans residues 9–25 (FLLIAVIAFGLVGYALY). Topologically, residues 26-43 (LQHVEGLQPCPLCVLQRF) are periplasmic. C35 and C38 form a disulfide bridge. A helical transmembrane segment spans residues 44-57 (AFVGIGVFSLLAAL). Over 58-63 (SSATRL) the chain is Cytoplasmic. The helical transmembrane segment at 64 to 81 (LWHGLGMLSGLGGIFVAG) threads the bilayer. The Periplasmic segment spans residues 82–136 (YHVSLLLNPKASCGIDPIENWVNALPTAKWLPQVFESDGLCTAPLPPVLGVSIPL). A disulfide bond links C94 and C122. Residues 137–155 (WSLIWMVILALTLVVAMIR) form a helical membrane-spanning segment. The Cytoplasmic portion of the chain corresponds to 156–159 (RERR).

The protein belongs to the DsbB family.

It is found in the cell inner membrane. In terms of biological role, required for disulfide bond formation in some periplasmic proteins. Acts by oxidizing the DsbA protein. The protein is Disulfide bond formation protein B of Ralstonia nicotianae (strain ATCC BAA-1114 / GMI1000) (Ralstonia solanacearum).